The chain runs to 114 residues: MHVDIYQIAASDTAIYPGAGDCDSIEGLSYVTMGLVGEAGEIANKVKKILRDKDGVITQENRDDLQAELGDVMWYVAQLANQLDVWLSTVTQRNLNKLQSRKDRGVIQGSGDNR.

The protein is Gene 37 protein (37) of Mycobacterium (Mycobacteriophage L5).